We begin with the raw amino-acid sequence, 289 residues long: ATP synthase gamma chain (289 aa).

Belongs to the ATPase gamma chain family. In terms of assembly, F-type ATPases have 2 components, CF(1) - the catalytic core - and CF(0) - the membrane proton channel. CF(1) has five subunits: alpha(3), beta(3), gamma(1), delta(1), epsilon(1). CF(0) has three main subunits: a, b and c.

The protein localises to the cell inner membrane. Its function is as follows. Produces ATP from ADP in the presence of a proton gradient across the membrane. The gamma chain is believed to be important in regulating ATPase activity and the flow of protons through the CF(0) complex. The polypeptide is ATP synthase gamma chain (Acinetobacter baylyi (strain ATCC 33305 / BD413 / ADP1)).